Reading from the N-terminus, the 490-residue chain is MTQWEVVIGLETHAQLSTVSKIFSGAPTQFGAEPNTQACPVDLALPGVLPVLNRGAVERAIRFGLAIGSTIAPRSIFARKNYFYPDLPKGYQISQYEIPVVQGGQITIQVPANEKAGKPAYEKTVNLTRAHLEEDAGKSLHEDFAGMTGIDLNRAGTPLLEIVTEPEMRSAAEAVAYAKALHALVVWLGICDGNMQEGSFRCDANVSVRPVGQEKFGTRAEIKNLNSFRFLEEAINYEVRRQIELIEDGGEVVQETRLYDPDKRETRSMRSKEDAHDYRYFPDPDLMPLVIGQDWIERVQAGMPELPAAIQQRFVDQYGVSAYDAGVLTSSKAMAAYFEAVVAKAGAANAKIAANWLMGDVSSQLNRDGIEIDAIPVSAAQLALVLQRIADGTISNKIAKEIFATIWDEKATDEGAADRIIDAKGLKQISDTGALEAIIDEVLAANAKSVEEFRAGKEKAFNALIGQAMKATKGKANPQQVNELLKKKLG.

The protein belongs to the GatB/GatE family. GatB subfamily. Heterotrimer of A, B and C subunits.

It catalyses the reaction L-glutamyl-tRNA(Gln) + L-glutamine + ATP + H2O = L-glutaminyl-tRNA(Gln) + L-glutamate + ADP + phosphate + H(+). It carries out the reaction L-aspartyl-tRNA(Asn) + L-glutamine + ATP + H2O = L-asparaginyl-tRNA(Asn) + L-glutamate + ADP + phosphate + 2 H(+). In terms of biological role, allows the formation of correctly charged Asn-tRNA(Asn) or Gln-tRNA(Gln) through the transamidation of misacylated Asp-tRNA(Asn) or Glu-tRNA(Gln) in organisms which lack either or both of asparaginyl-tRNA or glutaminyl-tRNA synthetases. The reaction takes place in the presence of glutamine and ATP through an activated phospho-Asp-tRNA(Asn) or phospho-Glu-tRNA(Gln). This chain is Aspartyl/glutamyl-tRNA(Asn/Gln) amidotransferase subunit B, found in Burkholderia vietnamiensis (strain G4 / LMG 22486) (Burkholderia cepacia (strain R1808)).